The following is a 226-amino-acid chain: ATP synthase F(0) complex subunit a (226 aa).

The next 7 helical transmembrane spans lie at 11–31 (SPELLMIPTALLSMLVPVLLI), 37–54 (LLGNRMTTAIAWLLMTIM), 72–92 (LTSLLLMILLSNLLGLLPYTF), 98–118 (LSMNMAMAIPLWMATIITGMT), 138–158 (IPFMIIIETISLLMRPLALGV), 178–198 (TLNFITSHITLSIMTYLLLFL), and 199–219 (LCILELAVACIQAYVFVLLII).

It belongs to the ATPase A chain family. In terms of assembly, component of the ATP synthase complex composed at least of ATP5F1A/subunit alpha, ATP5F1B/subunit beta, ATP5MC1/subunit c (homooctomer), MT-ATP6/subunit a, MT-ATP8/subunit 8, ATP5ME/subunit e, ATP5MF/subunit f, ATP5MG/subunit g, ATP5MK/subunit k, ATP5MJ/subunit j, ATP5F1C/subunit gamma, ATP5F1D/subunit delta, ATP5F1E/subunit epsilon, ATP5PF/subunit F6, ATP5PB/subunit b, ATP5PD/subunit d, ATP5PO/subunit OSCP. ATP synthase complex consists of a soluble F(1) head domain (subunits alpha(3) and beta(3)) - the catalytic core - and a membrane F(0) domain - the membrane proton channel (subunits c, a, 8, e, f, g, k and j). These two domains are linked by a central stalk (subunits gamma, delta, and epsilon) rotating inside the F1 region and a stationary peripheral stalk (subunits F6, b, d, and OSCP). Interacts with DNAJC30; interaction is direct.

It localises to the mitochondrion inner membrane. The enzyme catalyses H(+)(in) = H(+)(out). Its function is as follows. Subunit a, of the mitochondrial membrane ATP synthase complex (F(1)F(0) ATP synthase or Complex V) that produces ATP from ADP in the presence of a proton gradient across the membrane which is generated by electron transport complexes of the respiratory chain. ATP synthase complex consist of a soluble F(1) head domain - the catalytic core - and a membrane F(1) domain - the membrane proton channel. These two domains are linked by a central stalk rotating inside the F(1) region and a stationary peripheral stalk. During catalysis, ATP synthesis in the catalytic domain of F(1) is coupled via a rotary mechanism of the central stalk subunits to proton translocation. With the subunit c (ATP5MC1), forms the proton-conducting channel in the F(0) domain, that contains two crucial half-channels (inlet and outlet) that facilitate proton movement from the mitochondrial intermembrane space (IMS) into the matrix. Protons are taken up via the inlet half-channel and released through the outlet half-channel, following a Grotthuss mechanism. This is ATP synthase F(0) complex subunit a from Lycodon semicarinatus (Ryukyu odd-tooth snake).